The chain runs to 1393 residues: DNA-directed RNA polymerase subunit beta' (1393 aa).

Zn(2+) contacts are provided by Cys72, Cys74, Cys87, and Cys90. Residues Asp463, Asp465, and Asp467 each coordinate Mg(2+). Cys812, Cys887, Cys894, and Cys897 together coordinate Zn(2+).

The protein belongs to the RNA polymerase beta' chain family. The RNAP catalytic core consists of 2 alpha, 1 beta, 1 beta' and 1 omega subunit. When a sigma factor is associated with the core the holoenzyme is formed, which can initiate transcription. It depends on Mg(2+) as a cofactor. Zn(2+) is required as a cofactor.

The enzyme catalyses RNA(n) + a ribonucleoside 5'-triphosphate = RNA(n+1) + diphosphate. In terms of biological role, DNA-dependent RNA polymerase catalyzes the transcription of DNA into RNA using the four ribonucleoside triphosphates as substrates. The protein is DNA-directed RNA polymerase subunit beta' of Chlamydia felis (strain Fe/C-56) (Chlamydophila felis).